The primary structure comprises 226 residues: Isoprenyl transferase (226 aa).

Residue D12 is part of the active site. Residue D12 coordinates Mg(2+). Residues G13–R16, W17, K25, H29, and S57–E59 contribute to the substrate site. The Proton acceptor role is filled by N60. Residues W61, R63, R174, and R180–S182 contribute to the substrate site. E193 lines the Mg(2+) pocket.

Belongs to the UPP synthase family. Homodimer. It depends on Mg(2+) as a cofactor.

In terms of biological role, catalyzes the condensation of isopentenyl diphosphate (IPP) with allylic pyrophosphates generating different type of terpenoids. This is Isoprenyl transferase from Rickettsia prowazekii (strain Madrid E).